We begin with the raw amino-acid sequence, 417 residues long: NADH-quinone oxidoreductase subunit D (417 aa).

The protein belongs to the complex I 49 kDa subunit family. NDH-1 is composed of 14 different subunits. Subunits NuoB, C, D, E, F, and G constitute the peripheral sector of the complex.

Its subcellular location is the cell inner membrane. The enzyme catalyses a quinone + NADH + 5 H(+)(in) = a quinol + NAD(+) + 4 H(+)(out). NDH-1 shuttles electrons from NADH, via FMN and iron-sulfur (Fe-S) centers, to quinones in the respiratory chain. The immediate electron acceptor for the enzyme in this species is believed to be ubiquinone. Couples the redox reaction to proton translocation (for every two electrons transferred, four hydrogen ions are translocated across the cytoplasmic membrane), and thus conserves the redox energy in a proton gradient. The chain is NADH-quinone oxidoreductase subunit D from Halorhodospira halophila (strain DSM 244 / SL1) (Ectothiorhodospira halophila (strain DSM 244 / SL1)).